The following is a 404-amino-acid chain: MKILILNAGSSSQKSCLYDFKEKNFLDNPVEPIWKADIDWTLATGQGILTVKANGIKQKITLNSDDHHHGIAKMLGTLVEGKTKVIQHLSDISIVGHRVVHGGTDYSEATLITPDVKATIARLIPLAPTHNPSHLEGIEAIEQVLGNIPQVAVFDTAFHSQMPLEASVYPIPYEWLDKGIRRYGFHGTSHKYCAEKASQLLNKPLTHLKLITCHLGNGCSLAAIKNGISIDTTMGFTPLEGLMMGTRSGSIDPAILIYLMREYDFTFEQLNEMLNQESGLKGVSGISADLRAIFEAINQGNDRAQLALDMYLHRLRSQIGSMLASLGGLDALIFTAGIGENAAIVREKACQGFSFLGLKLDLEKNANSPVNIDISTPDSTVRILVIHTQEDWAIAQECCHWLNK.

Asn7 is a Mg(2+) binding site. ATP is bound at residue Lys14. Substrate is bound at residue Arg98. Asp155 acts as the Proton donor/acceptor in catalysis. Residues 214-218, 289-291, and 337-341 contribute to the ATP site; these read HLGNG, DLR, and GIGEN. Position 390 (Glu390) interacts with Mg(2+).

It belongs to the acetokinase family. Homodimer. Requires Mg(2+) as cofactor. Mn(2+) is required as a cofactor.

It localises to the cytoplasm. It catalyses the reaction acetate + ATP = acetyl phosphate + ADP. It participates in metabolic intermediate biosynthesis; acetyl-CoA biosynthesis; acetyl-CoA from acetate: step 1/2. Its function is as follows. Catalyzes the formation of acetyl phosphate from acetate and ATP. Can also catalyze the reverse reaction. The protein is Acetate kinase of Rippkaea orientalis (strain PCC 8801 / RF-1) (Cyanothece sp. (strain PCC 8801)).